The chain runs to 193 residues: dCTP deaminase (193 aa).

Residues 110–115 (RSSLAR), aspartate 128, 136–138 (VLE), tyrosine 171, lysine 178, and glutamine 182 each bind dCTP. Residue glutamate 138 is the Proton donor/acceptor of the active site. The interval 173 to 193 (KRKNAKYKDQQDAVASRISQD) is disordered.

The protein belongs to the dCTP deaminase family. Homotrimer.

The catalysed reaction is dCTP + H2O + H(+) = dUTP + NH4(+). It participates in pyrimidine metabolism; dUMP biosynthesis; dUMP from dCTP (dUTP route): step 1/2. Catalyzes the deamination of dCTP to dUTP. The sequence is that of dCTP deaminase from Shewanella sp. (strain ANA-3).